The following is a 193-amino-acid chain: Ion-translocating oxidoreductase complex subunit A (193 aa).

The next 6 membrane-spanning stretches (helical) occupy residues 5-25, 39-59, 72-92, 102-122, 134-154, and 171-191; these read LLLL…FLGL, IGMS…SYLV, LTTM…EMVV, LLGI…VALL, IIYG…FSAM, and AIAM…TGLV.

The protein belongs to the NqrDE/RnfAE family. As to quaternary structure, the complex is composed of six subunits: RnfA, RnfB, RnfC, RnfD, RnfE and RnfG.

Its subcellular location is the cell inner membrane. Part of a membrane-bound complex that couples electron transfer with translocation of ions across the membrane. This Colwellia psychrerythraea (strain 34H / ATCC BAA-681) (Vibrio psychroerythus) protein is Ion-translocating oxidoreductase complex subunit A.